The following is a 594-amino-acid chain: MSSLVMHVGIVNKPAITYLPTLSRSASNLHNVSSTRLQTSCSLQLDYKPVDETRRSGNYQPSAWDFEYIQSLKNKYKEEKYLTRHTKLTVQVKMLLDEDMEAVQQLDFIEDLNNLGISYLFKDKITQILNHIYNEHRCFHNNEAEESDLYFTALGFRLLRQHGFKVSQEVFDCFKNEKYTNFKASLAGDTKGLLQLYEASFLLREGEDTLELARKFSTKLLQQKIDEGEPDNNLLSCIRHSLELPLHWRLQRLEARWFLDAYATRHDMNPIIFELAKLEFNITQATQQEELKDLSRWWNSTGLAEKLPFARDRIVESYFWAMGTFEPHQYGYQRELVSKIIALTTVVDDIYDVYGTLEELELFTDVIRRWETESIDELPYYIQLCYLAVNKFVFDLAHDVLKDKGFNSLPYLKRSWKDLIERYLIEAKWYHNRYTPSLEEYLNNARVTITCPTILSQIYFALASPIEKPVIEVMYKYHDILYLSGMLLRLPDDLGTAPFELKRGDVPKAVQCYMKERNVPEKEAREHVRFLIREASKQMNTAMAIDCPFTEDFAVAAANLGRVANLAYVEGDGFGVQHSNIYEHIGSLMFKPYA.

Residues 1 to 50 (MSSLVMHVGIVNKPAITYLPTLSRSASNLHNVSSTRLQTSCSLQLDYKPV) constitute a chloroplast transit peptide. Mg(2+) is bound by residues Asp-348, Asp-352, Asp-492, and Glu-500. The DDXXD motif signature appears at 348–352 (DDIYD).

This sequence belongs to the terpene synthase family. Tpsa subfamily. Mg(2+) serves as cofactor. Mn(2+) is required as a cofactor. Expressed at high levels in leaves.

The protein localises to the plastid. Its subcellular location is the chloroplast. The enzyme catalyses (2E)-geranyl diphosphate = alpha-pinene + diphosphate. The catalysed reaction is (2E)-geranyl diphosphate + H2O = (1S,2S,4R)-endo-fenchol + diphosphate. It carries out the reaction (2E)-geranyl diphosphate = limonene + diphosphate. It participates in secondary metabolite biosynthesis; terpenoid biosynthesis. Its function is as follows. Monoterpene synthase involved in the biosynthesis of volatile compounds widely used in aromatherapy and folk medicine, and present in culinary herbs. Mediates the conversion of (2E)-geranyl diphosphate (GPP) into alpha fenchol, limonene and alpha-pinene and, as minor compounds, into beta-myrcene, alpha-terpinolene and alpha-phellandrene. This Lavandula pedunculata subsp. lusitanica (French lavender) protein is (-)-endo-fenchol synthase, chloroplastic.